The chain runs to 62 residues: uncharacterized protein (62 aa).

Residues 1-62 are disordered; sequence MTSTQNLKDK…PPKKSLSQLP (62 aa). The span at 7-29 shows a compositional bias: basic and acidic residues; the sequence is LKDKFEEEIRQQKEGKGKKEKVW. Over residues 32–43 the composition is skewed to polar residues; the sequence is HSDSSYNKQTAV.

This is an uncharacterized protein from Dictyostelium discoideum (Social amoeba).